The following is a 298-amino-acid chain: Spermidine synthase (298 aa).

Residues 13–248 (DGWFREINNM…GSIGFVVASK (236 aa)) form the PABS domain. Q44 provides a ligand contact to S-adenosyl 3-(methylsulfanyl)propylamine. Y74 contributes to the putrescine binding site. Residues Q75, D99, D119, 150–151 (DG), and D168 each bind S-adenosyl 3-(methylsulfanyl)propylamine. Catalysis depends on D168, which acts as the Proton acceptor. Residues 168-171 (DSSD) and Y236 contribute to the putrescine site.

Belongs to the spermidine/spermine synthase family.

The catalysed reaction is S-adenosyl 3-(methylsulfanyl)propylamine + putrescine = S-methyl-5'-thioadenosine + spermidine + H(+). It functions in the pathway amine and polyamine biosynthesis; spermidine biosynthesis; spermidine from putrescine: step 1/1. This chain is Spermidine synthase, found in Schizosaccharomyces pombe (strain 972 / ATCC 24843) (Fission yeast).